Consider the following 83-residue polypeptide: U5-theraphotoxin-Hs1d (83 aa).

A signal peptide spans 1–21; that stretch reads MKTSMFLTLTGLVLLFVVCYA. A propeptide spanning residues 22-49 is cleaved from the precursor; sequence SESEEKEFPKELLSSIFAADSDFKVEER. Cystine bridges form between Cys-51–Cys-63, Cys-56–Cys-68, and Cys-62–Cys-75.

It belongs to the neurotoxin 10 (Hwtx-1) family. 51 (Hntx-8) subfamily. Hntx-8 sub-subfamily. Expressed by the venom gland.

Its subcellular location is the secreted. Agglutinates erythrocytes. The sequence is that of U5-theraphotoxin-Hs1d from Cyriopagopus schmidti (Chinese bird spider).